The chain runs to 169 residues: Styrene-oxide isomerase (169 aa).

4 helical membrane-spanning segments follow: residues 13–33 (GILM…HLVG), 61–81 (PALN…LGFA), 85–105 (PHLL…FYFF), and 129–149 (FLAL…LAVI).

The protein localises to the membrane. The enzyme catalyses styrene oxide = 2-phenylacetaldehyde. Its pathway is aromatic compound metabolism. In terms of biological role, epoxystyrene isomerase that catalyzes the second step in the aerobic styrene degradation pathway by converting epoxystyrene to phenylacetaldehyde. The chain is Styrene-oxide isomerase (styC) from Pseudomonas fluorescens.